The chain runs to 148 residues: Large ribosomal subunit protein bL9 (148 aa).

Belongs to the bacterial ribosomal protein bL9 family.

Functionally, binds to the 23S rRNA. This Pseudomonas aeruginosa (strain LESB58) protein is Large ribosomal subunit protein bL9.